The sequence spans 214 residues: Small ribosomal subunit protein uS3c (214 aa).

Positions 39-111 (IRTYLNKLAK…QITINVVEVE (73 aa)) constitute a KH type-2 domain.

The protein belongs to the universal ribosomal protein uS3 family. As to quaternary structure, part of the 30S ribosomal subunit.

The protein localises to the plastid. It is found in the chloroplast. The sequence is that of Small ribosomal subunit protein uS3c (rps3) from Thalassiosira pseudonana (Marine diatom).